The sequence spans 405 residues: Elongation factor Tu (405 aa).

A tr-type G domain is found at 10–215 (KPHVNIGTIG…AVDSYIPTPE (206 aa)). The G1 stretch occupies residues 19–26 (GHVDHGKT). Residue 19–26 (GHVDHGKT) coordinates GTP. Thr26 provides a ligand contact to Mg(2+). The tract at residues 61 to 65 (GITIN) is G2. Residues 82-85 (DCPG) form a G3 region. GTP is bound by residues 82–86 (DCPGH) and 137–140 (NKVD). Positions 137-140 (NKVD) are G4. A G5 region spans residues 175–177 (SAL).

Belongs to the TRAFAC class translation factor GTPase superfamily. Classic translation factor GTPase family. EF-Tu/EF-1A subfamily. As to quaternary structure, monomer.

The protein localises to the cytoplasm. The catalysed reaction is GTP + H2O = GDP + phosphate + H(+). GTP hydrolase that promotes the GTP-dependent binding of aminoacyl-tRNA to the A-site of ribosomes during protein biosynthesis. The chain is Elongation factor Tu from Deinococcus radiodurans (strain ATCC 13939 / DSM 20539 / JCM 16871 / CCUG 27074 / LMG 4051 / NBRC 15346 / NCIMB 9279 / VKM B-1422 / R1).